The chain runs to 626 residues: Forkhead box protein O1 (626 aa).

Residues 1–11 (MAEAPLPPPPG) are compositionally biased toward pro residues. 4 disordered regions span residues 1–57 (MAEA…PAAG), 90–142 (DIRQ…SRRN), 218–319 (SSWW…MPEQ), and 484–519 (PTYG…MTHN). Composition is skewed to low complexity over residues 37–48 (NPSSSANSSPAP) and 101–133 (QHPQ…AQQP). Positions 144 to 238 (WGNLSYADLI…KNGKSPRRRA (95 aa)) form a DNA-binding region, fork-head. The span at 248-259 (AKSRGRAAKKKA) shows a compositional bias: basic residues. Low complexity predominate over residues 262-277 (QSSQDGSSDSPGSQFS). Polar residues-rich tracts occupy residues 298–310 (RPRT…TISG) and 484–494 (PTYGSQPTHNK).

In terms of processing, phosphorylated by AKT1; insulin-induced. IGF1 rapidly induces phosphorylation of Thr-28, Ser-240 and Ser-303. Phosphorylation of Ser-240 decreases DNA-binding activity and promotes the phosphorylation of Thr-28, and Ser-303, which leads to nuclear exclusion and loss of function. Phosphorylation of Ser-313 is independent of IGF1 and leads to reduced function.

It is found in the cytoplasm. Its subcellular location is the nucleus. Functionally, transcription factor that regulates metabolic homeostasis in response to oxidative stress. Binds to the consensus sequence 5'-TT[G/A]TTTTG-3' and the related Daf-16 family binding element (DBE) with consensus sequence 5'-TT[G/A]TTTAC-3'. Main regulator of redox balance and osteoblast numbers and controls bone mass. Orchestrates the endocrine function of the skeleton in regulating glucose metabolism. Also acts as a key regulator of chondrogenic commitment of skeletal progenitor cells in response to lipid availability: when lipids levels are low, translocates to the nucleus and promotes expression of sox9, which induces chondrogenic commitment and suppresses fatty acid oxidation. Acts synergistically with atf4 to suppress osteocalcin/bglap activity, increasing glucose levels and triggering glucose intolerance and insulin insensitivity. Also suppresses the transcriptional activity of runx2, an upstream activator of osteocalcin/bglap. May act as a positive regulator of apoptosis in cardiac smooth muscle cells as a result of its transcriptional activation of pro-apoptotic genes. In Xenopus tropicalis (Western clawed frog), this protein is Forkhead box protein O1.